The chain runs to 220 residues: Fructose-6-phosphate aldolase 1 (220 aa).

The Schiff-base intermediate with substrate role is filled by Lys85.

It belongs to the transaldolase family. Type 3A subfamily. As to quaternary structure, homodecamer.

It is found in the cytoplasm. It catalyses the reaction beta-D-fructose 6-phosphate = dihydroxyacetone + D-glyceraldehyde 3-phosphate. Functionally, catalyzes the reversible formation of fructose 6-phosphate from dihydroxyacetone and D-glyceraldehyde 3-phosphate via an aldolization reaction. The chain is Fructose-6-phosphate aldolase 1 (fsaA) from Escherichia coli O6:H1 (strain CFT073 / ATCC 700928 / UPEC).